Reading from the N-terminus, the 67-residue chain is Small ribosomal subunit protein eS27 (67 aa).

Cys-22, Cys-25, Cys-41, and Cys-44 together coordinate Zn(2+). The segment at 22-44 adopts a C4-type zinc-finger fold; sequence CPDCGNEQITFSHAAMVVRCLVC.

This sequence belongs to the eukaryotic ribosomal protein eS27 family. Part of the 30S ribosomal subunit. The cofactor is Zn(2+).

This Pyrobaculum aerophilum (strain ATCC 51768 / DSM 7523 / JCM 9630 / CIP 104966 / NBRC 100827 / IM2) protein is Small ribosomal subunit protein eS27.